A 280-amino-acid chain; its full sequence is Ribulose-phosphate 3-epimerase, chloroplastic (280 aa).

The transit peptide at 1–45 (SLGSSTLLQSQISGFGGSQKLQKISFSNPNSLTFTRRRIQTVVNA) directs the protein to the chloroplast. Residue Ser-62 coordinates substrate. A divalent metal cation contacts are provided by His-87, Asp-89, and His-120. Asp-89 functions as the Proton acceptor in the catalytic mechanism. Substrate is bound by residues His-120, 198–201 (GFGG), 231–233 (DGG), and 253–254 (GS). Asp-231 contacts a divalent metal cation. Catalysis depends on Asp-231, which acts as the Proton donor.

The protein belongs to the ribulose-phosphate 3-epimerase family. In terms of assembly, homohexamer. It depends on Co(2+) as a cofactor. The cofactor is Fe(2+). Requires Mn(2+) as cofactor. Zn(2+) serves as cofactor. As to expression, highest level of expression in leaves, whereas it is low in roots, tubers, and stems.

The protein localises to the plastid. Its subcellular location is the chloroplast thylakoid membrane. It carries out the reaction D-ribulose 5-phosphate = D-xylulose 5-phosphate. Its pathway is carbohydrate biosynthesis; Calvin cycle. Catalyzes the reversible epimerization of D-ribulose 5-phosphate to D-xylulose 5-phosphate. The polypeptide is Ribulose-phosphate 3-epimerase, chloroplastic (Solanum tuberosum (Potato)).